The sequence spans 360 residues: Peptide chain release factor 1 (360 aa).

Glutamine 235 is modified (N5-methylglutamine). Residues 284–293 show a composition bias toward basic and acidic residues; sequence HKRQQEEAST. The disordered stretch occupies residues 284–305; the sequence is HKRQQEEASTRRNLLGSGDRSD.

Belongs to the prokaryotic/mitochondrial release factor family. Post-translationally, methylated by PrmC. Methylation increases the termination efficiency of RF1.

It is found in the cytoplasm. In terms of biological role, peptide chain release factor 1 directs the termination of translation in response to the peptide chain termination codons UAG and UAA. This chain is Peptide chain release factor 1, found in Pectobacterium atrosepticum (strain SCRI 1043 / ATCC BAA-672) (Erwinia carotovora subsp. atroseptica).